Here is a 193-residue protein sequence, read N- to C-terminus: Fe/S biogenesis protein NfuA (193 aa).

Residues Cys-150 and Cys-153 each coordinate [4Fe-4S] cluster.

The protein belongs to the NfuA family. As to quaternary structure, homodimer. [4Fe-4S] cluster is required as a cofactor.

Involved in iron-sulfur cluster biogenesis. Binds a 4Fe-4S cluster, can transfer this cluster to apoproteins, and thereby intervenes in the maturation of Fe/S proteins. Could also act as a scaffold/chaperone for damaged Fe/S proteins. The polypeptide is Fe/S biogenesis protein NfuA (Histophilus somni (strain 129Pt) (Haemophilus somnus)).